The sequence spans 481 residues: Cobyric acid synthase (481 aa).

Residues 248 to 435 (ALTVAWLAFS…LHGMFGADGF (188 aa)) enclose the GATase cobBQ-type domain. Catalysis depends on C330, which acts as the Nucleophile. Residue H427 is part of the active site.

It belongs to the CobB/CobQ family. CobQ subfamily.

The protein operates within cofactor biosynthesis; adenosylcobalamin biosynthesis. Its function is as follows. Catalyzes amidations at positions B, D, E, and G on adenosylcobyrinic A,C-diamide. NH(2) groups are provided by glutamine, and one molecule of ATP is hydrogenolyzed for each amidation. This Cereibacter sphaeroides (strain ATCC 17023 / DSM 158 / JCM 6121 / CCUG 31486 / LMG 2827 / NBRC 12203 / NCIMB 8253 / ATH 2.4.1.) (Rhodobacter sphaeroides) protein is Cobyric acid synthase.